A 256-amino-acid chain; its full sequence is Protein RKD4 (256 aa).

The RWP-RK domain occupies 130 to 216 (EKVTVKKKRN…MEEEVKNLEE (87 aa)). Residues 190–224 (RKLKSLNSLIKNLKNVGMEEEVKNLEEHRFLIEQE) adopt a coiled-coil conformation.

It is found in the nucleus. In terms of biological role, putative transcription factor. The chain is Protein RKD4 (RKD4) from Arabidopsis thaliana (Mouse-ear cress).